Here is a 484-residue protein sequence, read N- to C-terminus: Glutamate--tRNA ligase (484 aa).

The short motif at 11 to 21 (PSPTGYPHLGN) is the 'HIGH' region element. Residues C108, C110, C135, and D137 each contribute to the Zn(2+) site. The 'KMSKS' region motif lies at 245–249 (KLSKR). Residue K248 participates in ATP binding.

Belongs to the class-I aminoacyl-tRNA synthetase family. Glutamate--tRNA ligase type 1 subfamily. In terms of assembly, monomer. Zn(2+) is required as a cofactor.

The protein localises to the cytoplasm. It catalyses the reaction tRNA(Glu) + L-glutamate + ATP = L-glutamyl-tRNA(Glu) + AMP + diphosphate. Functionally, catalyzes the attachment of glutamate to tRNA(Glu) in a two-step reaction: glutamate is first activated by ATP to form Glu-AMP and then transferred to the acceptor end of tRNA(Glu). The protein is Glutamate--tRNA ligase of Dehalococcoides mccartyi (strain ATCC BAA-2266 / KCTC 15142 / 195) (Dehalococcoides ethenogenes (strain 195)).